Reading from the N-terminus, the 292-residue chain is MAFVSMKELLQEAKEHHYAIGQFNINGLQWTKAILEAAEEERSPVIAAASDRLIDYLGGFKTVSAMVAALIEEMSISVPVVLHLDHGKSPERCKQAIDAGFSSVMIDGSHSPIDENIAMTKEVVSYAGVRNVSVEAEVGTVGGMEDGLIGGVQYADIGECERIVKETGIDALAAALGSVHGKYQGEPNLGFKEMEEISRVTDIPLVLHGASGIPADQIARTIRLGHAKININTECMVAWTEKTRSIFKDNPDLYEPRAYMTPGISAVKETVKHKMREFGSSGKAVCTQKIEI.

Asp85 acts as the Proton donor in catalysis. Zn(2+) is bound by residues His86 and His180. Gly181 is a dihydroxyacetone phosphate binding site. His208 contributes to the Zn(2+) binding site. Residues 209–211 and 230–233 contribute to the dihydroxyacetone phosphate site; these read GAS and NINT. A Phosphothreonine modification is found at Thr233.

This sequence belongs to the class II fructose-bisphosphate aldolase family. IolJ subfamily. Zn(2+) serves as cofactor.

It carries out the reaction 6-phospho-5-dehydro-2-deoxy-D-gluconate = 3-oxopropanoate + dihydroxyacetone phosphate. It functions in the pathway polyol metabolism; myo-inositol degradation into acetyl-CoA; acetyl-CoA from myo-inositol: step 6/7. Its function is as follows. Produces dihydroxyacetone phosphate (DHAP or glycerone phosphate) and malonic semialdehyde (MSA or 3-oxopropanoate) from 6-phospho-5-dehydro-2-deoxy-D-gluconate (DKGP). The chain is 6-phospho-5-dehydro-2-deoxy-D-gluconate aldolase (iolJ) from Bacillus licheniformis (strain ATCC 14580 / DSM 13 / JCM 2505 / CCUG 7422 / NBRC 12200 / NCIMB 9375 / NCTC 10341 / NRRL NRS-1264 / Gibson 46).